The following is a 357-amino-acid chain: Protein RecA (357 aa).

71–78 is a binding site for ATP; it reads GPESSGKT.

It belongs to the RecA family.

The protein resides in the cytoplasm. In terms of biological role, can catalyze the hydrolysis of ATP in the presence of single-stranded DNA, the ATP-dependent uptake of single-stranded DNA by duplex DNA, and the ATP-dependent hybridization of homologous single-stranded DNAs. It interacts with LexA causing its activation and leading to its autocatalytic cleavage. In Ehrlichia canis (strain Jake), this protein is Protein RecA.